A 307-amino-acid polypeptide reads, in one-letter code: Potassium channel subfamily K member 7 (307 aa).

The Cytoplasmic portion of the chain corresponds to 1–10; the sequence is MGSLKPWARY. The helical transmembrane segment at 11-31 threads the bilayer; that stretch reads LLLLMAHLLAMGLGAVVLQAL. N-linked (GlcNAc...) asparagine glycosylation occurs at asparagine 83. The pore-forming intramembrane region spans 92–118; the sequence is LPSALLFTASILTTTGYGHMAPLSSGG. The chain crosses the membrane as a helical span at residues 120-140; that stretch reads AFCVVYAALGLPASLALVAAL. Residues 141–172 are Cytoplasmic-facing; the sequence is RHCLLPVFSRPGDWVAIRWQLAPAQAALLQAA. Residues 173 to 193 traverse the membrane as a helical segment; that stretch reads GLGLLVACVFMLLPALVLWGV. The pore-forming intramembrane region spans 199–227; that stretch reads LLEAIYFCFGSLSTIGLGDLLPAHGRGLH. A helical transmembrane segment spans residues 233–253; the sequence is LGQFALLGYLLLGLLAMLLAV. Residues 254-307 lie on the Cytoplasmic side of the membrane; sequence ETFSELPQVRAMVKFFGPSGSRTDEDQDGILGQDELALSTVLPDAPVLGPTTPA.

The protein belongs to the two pore domain potassium channel (TC 1.A.1.8) family. As to quaternary structure, homodimer. As to expression, detected in embryo, eye, lung and liver. Weakly expressed in colon, testis, atria, kidney, intestine, bladder, uterus, ovary, salivary gland, thymus and brain stem. Not detected in brain, cerebellum, spinal cord, heart, ventricle, skeletal muscle, liver, placenta and pancreas. In the eye, highly expressed in the retinal ganglion cell layer and inner nuclear layer.

The protein localises to the membrane. Its function is as follows. Probable potassium channel subunit. No channel activity observed in vitro as protein remains in the endoplasmic reticulum. May need to associate with an as yet unknown partner in order to reach the plasma membrane. This chain is Potassium channel subfamily K member 7 (Kcnk7), found in Mus musculus (Mouse).